Here is a 190-residue protein sequence, read N- to C-terminus: Threonylcarbamoyl-AMP synthase (190 aa).

One can recognise a YrdC-like domain in the interval 7 to 190 (GDAIAAAIDV…ALTGELFRQG (184 aa)).

It belongs to the SUA5 family. TsaC subfamily.

It localises to the cytoplasm. It carries out the reaction L-threonine + hydrogencarbonate + ATP = L-threonylcarbamoyladenylate + diphosphate + H2O. Its function is as follows. Required for the formation of a threonylcarbamoyl group on adenosine at position 37 (t(6)A37) in tRNAs that read codons beginning with adenine. Catalyzes the conversion of L-threonine, HCO(3)(-)/CO(2) and ATP to give threonylcarbamoyl-AMP (TC-AMP) as the acyladenylate intermediate, with the release of diphosphate. The sequence is that of Threonylcarbamoyl-AMP synthase from Escherichia coli O1:K1 / APEC.